The primary structure comprises 488 residues: RuvB-like helicase 1 (488 aa).

Positions 1 to 11 (MATANTSSGSM) are enriched in polar residues. Residues 1-29 (MATANTSSGSMNGVGPVTMDSSTSGASRE) are disordered. 87 to 94 (GGPGTGKT) is a binding site for ATP.

It belongs to the RuvB family. In terms of assembly, may form heterododecamers with RVB2. Component of the SWR1 chromatin remodeling complex, the INO80 chromatin remodeling complex, and of the R2TP complex.

The protein localises to the nucleus. The enzyme catalyses ATP + H2O = ADP + phosphate + H(+). Its function is as follows. DNA helicase which participates in several chromatin remodeling complexes, including the SWR1 and the INO80 complexes. The SWR1 complex mediates the ATP-dependent exchange of histone H2A for the H2A variant HZT1 leading to transcriptional regulation of selected genes by chromatin remodeling. The INO80 complex remodels chromatin by shifting nucleosomes and is involved in DNA repair. Also involved in pre-rRNA processing. The protein is RuvB-like helicase 1 (RVB1) of Mycosarcoma maydis (Corn smut fungus).